The sequence spans 116 residues: uncharacterized protein (116 aa).

This is an uncharacterized protein from Archaeoglobus fulgidus (strain ATCC 49558 / DSM 4304 / JCM 9628 / NBRC 100126 / VC-16).